The chain runs to 117 residues: UPF0642 protein C32H8.05 (117 aa).

The tract at residues 39-117 (DQVNDLTKSS…SNFSKFLKKK (79 aa)) is disordered. Residues 93-106 (KWAKKHLKKGKRAK) are compositionally biased toward basic residues. Positions 107–117 (NSNFSKFLKKK) are enriched in low complexity.

It belongs to the UPF0642 family.

It localises to the nucleus. The protein localises to the nucleolus. This is UPF0642 protein C32H8.05 from Schizosaccharomyces pombe (strain 972 / ATCC 24843) (Fission yeast).